We begin with the raw amino-acid sequence, 329 residues long: GTP 3',8-cyclase (329 aa).

The Radical SAM core domain occupies 8–234; that stretch reads AFARKFYYLR…QLRQRSDGPA (227 aa). Residue Arg-17 coordinates GTP. Residues Cys-24 and Cys-28 each coordinate [4Fe-4S] cluster. S-adenosyl-L-methionine is bound at residue Tyr-30. Cys-31 serves as a coordination point for [4Fe-4S] cluster. Arg-68 contributes to the GTP binding site. An S-adenosyl-L-methionine-binding site is contributed by Gly-72. Thr-99 contacts GTP. Ser-123 serves as a coordination point for S-adenosyl-L-methionine. Residue Lys-160 participates in GTP binding. Residue Met-194 participates in S-adenosyl-L-methionine binding. Residues Cys-257 and Cys-260 each coordinate [4Fe-4S] cluster. 262-264 serves as a coordination point for GTP; it reads RLR. Position 274 (Cys-274) interacts with [4Fe-4S] cluster.

This sequence belongs to the radical SAM superfamily. MoaA family. As to quaternary structure, monomer and homodimer. It depends on [4Fe-4S] cluster as a cofactor.

It catalyses the reaction GTP + AH2 + S-adenosyl-L-methionine = (8S)-3',8-cyclo-7,8-dihydroguanosine 5'-triphosphate + 5'-deoxyadenosine + L-methionine + A + H(+). It functions in the pathway cofactor biosynthesis; molybdopterin biosynthesis. Catalyzes the cyclization of GTP to (8S)-3',8-cyclo-7,8-dihydroguanosine 5'-triphosphate. The protein is GTP 3',8-cyclase of Salmonella heidelberg (strain SL476).